The chain runs to 784 residues: Endonuclease MutS2 (784 aa).

ATP is bound at residue 335–342 (GPNTGGKT). One can recognise a Smr domain in the interval 709–784 (LDLRGERYED…GTGVTIVELK (76 aa)).

This sequence belongs to the DNA mismatch repair MutS family. MutS2 subfamily. Homodimer. Binds to stalled ribosomes, contacting rRNA.

Endonuclease that is involved in the suppression of homologous recombination and thus may have a key role in the control of bacterial genetic diversity. In terms of biological role, acts as a ribosome collision sensor, splitting the ribosome into its 2 subunits. Detects stalled/collided 70S ribosomes which it binds and splits by an ATP-hydrolysis driven conformational change. Acts upstream of the ribosome quality control system (RQC), a ribosome-associated complex that mediates the extraction of incompletely synthesized nascent chains from stalled ribosomes and their subsequent degradation. Probably generates substrates for RQC. This chain is Endonuclease MutS2, found in Geobacillus kaustophilus (strain HTA426).